A 506-amino-acid polypeptide reads, in one-letter code: PHD finger protein 10 (506 aa).

Disordered regions lie at residues 1-66 (MAAV…QDFG) and 293-377 (DPEL…SVSG). Basic and acidic residues predominate over residues 23–35 (VKEDNSNDTKDPE). A compositionally biased stretch (polar residues) spans 52-66 (GDSTPSCENSNQDFG). The segment at 90–299 (MLQEQVSEYL…DPLDPELLAL (210 aa)) is SAY. Residues 326–338 (SIDSSSMNMSESD) show a composition bias toward low complexity. The span at 353 to 367 (KVKEKSSTPRKEGSK) shows a compositional bias: basic and acidic residues. The PHD-type 1; degenerate zinc-finger motif lies at 387-444 (ICGICLKGKDANKKGRSERLIHCSQCDNSGHPSCLDMSAELVAVIKKYPWQCMECKTC). The PHD-type 2; degenerate zinc finger occupies 446–489 (ICGQPHHEEEMMFCDTCDRGYHTFCVGLGALPSGRWICDCCQKV).

The protein belongs to the SAYP family. In terms of assembly, component of neural progenitors-specific chromatin remodeling complex (npBAF complex), a subfamily of ATP-dependent SWI/SNF chromatin remodeling complexes.

It localises to the nucleus. Functionally, involved in transcription activity regulation by chromatin remodeling in the context of the neural progenitors-specific chromatin remodeling complex (npBAF complex). May play a role in the proliferation of neural progenitors. This chain is PHD finger protein 10 (phf10), found in Xenopus laevis (African clawed frog).